The primary structure comprises 747 residues: Cysteine--tRNA ligase, cytoplasmic (747 aa).

Residues 1–25 are disordered; the sequence is MTDSWERGKGRRTQPPWSAPNTQAQ. The segment covering 15–25 has biased composition (polar residues); it reads PPWSAPNTQAQ. Cysteine 54 is a Zn(2+) binding site. Glycine 55 provides a ligand contact to L-cysteine. The 'HIGH' region motif lies at 56–66; the sequence is PTVYDASHMGH. An L-cysteine-binding site is contributed by threonine 95. The 'KIIK' region signature appears at 100 to 103; the sequence is KIIK. 3 residues coordinate Zn(2+): cysteine 347, histidine 372, and glutamate 376. Histidine 372 is a binding site for L-cysteine. A 'KMSKS' region motif is present at residues 405-409; that stretch reads KMSKS. Lysine 408 contributes to the ATP binding site. Basic and acidic residues predominate over residues 651–683; that stretch reads EEKRKAEEEKQRKKEEAARKKQQQEAAKLEKMK. Residues 651-722 are disordered; sequence EEKRKAEEEK…KELSKGQSKK (72 aa).

It belongs to the class-I aminoacyl-tRNA synthetase family. As to quaternary structure, homodimer. Zn(2+) is required as a cofactor.

The protein resides in the cytoplasm. The enzyme catalyses tRNA(Cys) + L-cysteine + ATP = L-cysteinyl-tRNA(Cys) + AMP + diphosphate. Its function is as follows. Catalyzes the ATP-dependent ligation of cysteine to tRNA(Cys). This is Cysteine--tRNA ligase, cytoplasmic (cars1) from Xenopus tropicalis (Western clawed frog).